The sequence spans 356 residues: Ornithine cyclodeaminase (356 aa).

L-ornithine-binding residues include arginine 53 and lysine 77. Residues threonine 92, arginine 120, 147-148 (AQ), aspartate 169, threonine 209, 232-235 (VGGD), lysine 239, and serine 300 each bind NAD(+). Arginine 120 contributes to the L-ornithine binding site. Aspartate 235 is an L-ornithine binding site. Residue aspartate 235 is the Proton donor/acceptor of the active site. Valine 301 serves as a coordination point for L-ornithine.

This sequence belongs to the ornithine cyclodeaminase/mu-crystallin family. It depends on NAD(+) as a cofactor.

The catalysed reaction is L-ornithine = L-proline + NH4(+). Its pathway is amino-acid biosynthesis; L-proline biosynthesis; L-proline from L-ornithine: step 1/1. Is inhibited by L-proline and L-lysine. Is not activated by small concentrations of L-arginine, and is even inhibited by about 50% at 0.5 mM L-arginine. Catalyzes the conversion of L-ornithine into L-proline with release of ammonia. Is involved in the utilization of octopine, a catabolic pathway that proceeds through L-arginine and L-ornithine to L-proline. Octopine is a predominant opine in plant cells transformed with Ti plasmid pTiAch5. This chain is Ornithine cyclodeaminase, found in Agrobacterium tumefaciens (strain Ach5).